Reading from the N-terminus, the 341-residue chain is Phenylalanine--tRNA ligase alpha subunit (341 aa).

Residue Glu256 coordinates Mg(2+).

Belongs to the class-II aminoacyl-tRNA synthetase family. Phe-tRNA synthetase alpha subunit type 1 subfamily. In terms of assembly, tetramer of two alpha and two beta subunits. The cofactor is Mg(2+).

The protein localises to the cytoplasm. The catalysed reaction is tRNA(Phe) + L-phenylalanine + ATP = L-phenylalanyl-tRNA(Phe) + AMP + diphosphate + H(+). The chain is Phenylalanine--tRNA ligase alpha subunit from Clostridium perfringens (strain 13 / Type A).